The following is a 143-amino-acid chain: Mediator of RNA polymerase II transcription subunit 21 (143 aa).

Residues 53–130 adopt a coiled-coil conformation; the sequence is KEFEKNIDEL…KVRTLTQDFT (78 aa).

This sequence belongs to the Mediator complex subunit 21 family. As to quaternary structure, component of the Mediator complex.

It is found in the nucleus. Component of the Mediator complex, a coactivator involved in the regulated transcription of nearly all RNA polymerase II-dependent genes. Mediator functions as a bridge to convey information from gene-specific regulatory proteins to the basal RNA polymerase II transcription machinery. Mediator is recruited to promoters by direct interactions with regulatory proteins and serves as a scaffold for the assembly of a functional preinitiation complex with RNA polymerase II and the general transcription factors. The chain is Mediator of RNA polymerase II transcription subunit 21 (SRB7) from Kluyveromyces lactis (strain ATCC 8585 / CBS 2359 / DSM 70799 / NBRC 1267 / NRRL Y-1140 / WM37) (Yeast).